The sequence spans 898 residues: Probable LRR receptor-like serine/threonine-protein kinase At4g20450 (898 aa).

Positions 1-24 are cleaved as a signal peptide; it reads MEGIHKLIFLALIWIFLITNIVDA. Topologically, residues 25–535 are extracellular; that stretch reads QDQQGFISLD…TGPGNNKKKL (511 aa). N-linked (GlcNAc...) asparagine glycosylation is found at Asn40, Asn52, Asn98, Asn247, Asn253, Asn420, Asn443, Asn465, Asn484, and Asn489. LRR repeat units follow at residues 455-477, 479-501, and 505-526; these read QLQK…LAKM, LLTF…LLNM, and GLIT…ESET. Residues 536-556 traverse the membrane as a helical segment; that stretch reads LVPILASAASVGIIIAVLLLV. The Cytoplasmic segment spans residues 557–898; sequence NILLLRKKKP…FGPEHIPDAR (342 aa). The residue at position 582 (Thr582) is a Phosphothreonine. One can recognise a Protein kinase domain in the interval 591 to 864; that stretch reads NNFERPLGEG…QVANELQECL (274 aa). ATP-binding positions include 597-605 and Lys619; that span reads LGEGGFGVV. A Phosphotyrosine modification is found at Tyr664. The active-site Proton acceptor is the Asp716. A Phosphoserine modification is found at Ser750. Residue Thr751 is modified to Phosphothreonine. The residue at position 764 (Tyr764) is a Phosphotyrosine. A disordered region spans residues 864-898; that stretch reads LLTENSRKGGRHDVDSKSSLEQSTSFGPEHIPDAR. A compositionally biased stretch (basic and acidic residues) spans 868 to 881; the sequence is NSRKGGRHDVDSKS.

It belongs to the protein kinase superfamily. Ser/Thr protein kinase family.

The protein resides in the membrane. It carries out the reaction L-seryl-[protein] + ATP = O-phospho-L-seryl-[protein] + ADP + H(+). The enzyme catalyses L-threonyl-[protein] + ATP = O-phospho-L-threonyl-[protein] + ADP + H(+). The protein is Probable LRR receptor-like serine/threonine-protein kinase At4g20450 of Arabidopsis thaliana (Mouse-ear cress).